The sequence spans 344 residues: S-methyl-5'-thioadenosine phosphorylase (344 aa).

Residues T51, 99–100 (RH), and 132–133 (SA) contribute to the phosphate site. M234 provides a ligand contact to substrate. S235 provides a ligand contact to phosphate. Position 258-260 (258-260 (DYD)) interacts with substrate.

The protein belongs to the PNP/MTAP phosphorylase family. MTAP subfamily. As to quaternary structure, homotrimer.

Its subcellular location is the cytoplasm. It localises to the nucleus. It catalyses the reaction S-methyl-5'-thioadenosine + phosphate = 5-(methylsulfanyl)-alpha-D-ribose 1-phosphate + adenine. Its pathway is amino-acid biosynthesis; L-methionine biosynthesis via salvage pathway; S-methyl-5-thio-alpha-D-ribose 1-phosphate from S-methyl-5'-thioadenosine (phosphorylase route): step 1/1. Catalyzes the reversible phosphorylation of S-methyl-5'-thioadenosine (MTA) to adenine and 5-methylthioribose-1-phosphate. Involved in the breakdown of MTA, a major by-product of polyamine biosynthesis. Responsible for the first step in the methionine salvage pathway after MTA has been generated from S-adenosylmethionine. Has broad substrate specificity with 6-aminopurine nucleosides as preferred substrates. The polypeptide is S-methyl-5'-thioadenosine phosphorylase (Phaeosphaeria nodorum (strain SN15 / ATCC MYA-4574 / FGSC 10173) (Glume blotch fungus)).